The following is an 841-amino-acid chain: Rho guanine nucleotide exchange factor 15 (841 aa).

Disordered stretches follow at residues 1 to 179 (MSAQ…QARA), 239 to 261 (RRASPLRTSRSRPHPPSIGHPAV), and 279 to 333 (KPPK…REEE). The segment covering 39 to 53 (NGSSPQELPRNSNDA) has biased composition (polar residues). A compositionally biased stretch (low complexity) spans 65–110 (PPAASLKPPALLPPSASRASLDSQTSPDSPSSTPTPSPVSRRSASP). Phosphoserine occurs at positions 107 and 109. The span at 111 to 124 (EPAPRSPVPPPKPS) shows a compositional bias: pro residues. Phosphotyrosine; by EPHB2 is present on Tyr353. In terms of domain architecture, DH spans 417 to 601 (RMQESLFEVV…SKIIERCSAE (185 aa)). Positions 765 to 793 (ESSAPAKTEGRSLESRAAPKHLHKTPEGW) are disordered.

As to quaternary structure, interacts with EPHB2. Interacts with EPHA4. In terms of processing, phosphorylated on tyrosine residues upon EFNA1 stimulation. EPHB2-dependent phosphorylation at Tyr-353 triggers UBE3A-mediated ubiquitination. Ubiquitinated; UBE3A-mediated ubiquitination and degradation by the proteasome promotes EFNB1-dependent synapse formation. As to expression, expressed in the vascular smooth muscle of coronary artery.

It localises to the cell projection. It is found in the dendrite. Functionally, specific GEF for RhoA activation. Does not activate RAC1 or CDC42. Regulates vascular smooth muscle contractility. Negatively regulates excitatory synapse development by suppressing the synapse-promoting activity of EPHB2. This is Rho guanine nucleotide exchange factor 15 (ARHGEF15) from Homo sapiens (Human).